The following is a 456-amino-acid chain: Protein translocase subunit SecY (456 aa).

The Cytoplasmic portion of the chain corresponds to 1–21 (MEQLKEKFEPLFSVLPQVKSP). A helical membrane pass occupies residues 22 to 48 (GYRVPFREKLKWTGIILVLYFFLAQIP). The Extracellular portion of the chain corresponds to 49–59 (LYGLSANAVDQ). Positions 60-67 (FAQFRAVL) form an intramembrane region, helical. The chain crosses the membrane as a discontinuously helical span at residues 60–88 (FAQFRAVLAGNFGSILTLGIGPIVSASII). An intramembrane segment occupies 68–79 (AGNFGSILTLGI). Residues 80-88 (GPIVSASII) constitute an intramembrane region (helical). At 89 to 109 (LQLLVGGKILKLDLSRHEDKA) the chain is on the cytoplasmic side. Residues 110 to 134 (FFQGLQKLLAIVFTFFEALIFVLTG) form a helical membrane-spanning segment. The Extracellular portion of the chain corresponds to 135-141 (SLAPSAP). Residues 142 to 166 (QFVWVLILQLTIGGILIIFLDEVVS) form a helical membrane-spanning segment. The Cytoplasmic portion of the chain corresponds to 167-172 (KWGFGS). Residues 173–191 (GVGLFIAAGVSQEIIVGAF) form a helical membrane-spanning segment. Residues 192–224 (NPLSAPTQPGVPAGRITGFLYLLFTGQSPDFQY) are Extracellular-facing. A helical transmembrane segment spans residues 225-246 (YVLPVLALIAVFLVVVYAESMR). Residues 247–275 (VEIPISMGGGKRLSRGAVGKYPLRFIYAS) lie on the Cytoplasmic side of the membrane. The helical transmembrane segment at 276–297 (NMPVILTSALLLNVQLLANVFQ) threads the bilayer. Over 298-334 (KLGYPILGTVSNGQAVDGLAYLLTAPRSIDALILDPF) the chain is Extracellular. A helical membrane pass occupies residues 335 to 354 (RVVFYAVVFIGLCVLFAWLW). Residues 355–397 (VEISNIGPRHVARQLYQMGMQIPGFRSSRGQFEKILKRYIPTI) lie on the Cytoplasmic side of the membrane. A helical membrane pass occupies residues 398 to 416 (TILGGAFVGLLAFVADLTG). The Extracellular segment spans residues 417 to 419 (SLG). Residues 420-434 (GGTGVLLTVGIVYRL) traverse the membrane as a helical segment. At 435–456 (YEEIAQEQLMDMHPILRSFLGD) the chain is on the cytoplasmic side.

The protein belongs to the SecY/SEC61-alpha family. In terms of assembly, component of the Sec protein translocase complex. Heterotrimer consisting of alpha (SecY), beta (SecG) and gamma (SecE) subunits. The heterotrimers can form oligomers, although 1 heterotrimer is thought to be able to translocate proteins. Interacts with the ribosome. May interact with SecDF, and other proteins may be involved.

It is found in the cell membrane. The central subunit of the protein translocation channel SecYEG. Consists of two halves formed by TMs 1-5 and 6-10. These two domains form a lateral gate at the front which open onto the bilayer between TMs 2 and 7, and are clamped together by SecE at the back. The channel is closed by both a pore ring composed of hydrophobic SecY resides and a short helix (helix 2A) on the extracellular side of the membrane which forms a plug. The plug probably moves laterally to allow the channel to open. The ring and the pore may move independently. This is Protein translocase subunit SecY from Methanothermobacter thermautotrophicus (strain ATCC 29096 / DSM 1053 / JCM 10044 / NBRC 100330 / Delta H) (Methanobacterium thermoautotrophicum).